Here is a 512-residue protein sequence, read N- to C-terminus: Serine--tRNA ligase, cytoplasmic (512 aa).

Position 1 is an N-acetylmethionine (M1). An interaction with tRNA region spans residues 9–61; the sequence is RVDKGGDPALIRETQEKRFKDPGLVDQLVKADSEWRRCRFRADNLNKLKNLCS. Position 241 is a phosphoserine (S241). Residues T271 and R302 each contribute to the L-serine site. Residues 302-304 and 318-321 contribute to the ATP site; these read RQE and VHQF. K323 carries the N6-acetyllysine modification. Residue E325 coordinates L-serine. 391 to 394 contributes to the ATP binding site; the sequence is ELVS. L-serine is bound at residue N427. A disordered region spans residues 472-512; the sequence is KPAPIDQEPSKKQKKQHEGSKKKAKEVTLENQLQNMEVTEA. Basic and acidic residues predominate over residues 479-499; the sequence is EPSKKQKKQHEGSKKKAKEVT. Residues 482 to 494 carry the Nuclear localization signal motif; sequence KKQKKQHEGSKKK. A compositionally biased stretch (polar residues) spans 500-512; the sequence is LENQLQNMEVTEA.

This sequence belongs to the class-II aminoacyl-tRNA synthetase family. Type-1 seryl-tRNA synthetase subfamily. In terms of assembly, homodimer. The tRNA molecule may bind across the dimer. Interacts with SIRT2. Interacts with METTL6; interaction is required for the tRNA N(3)-methylcytidine methyltransferase activity of METTL6.

It is found in the cytoplasm. The protein resides in the nucleus. It catalyses the reaction tRNA(Ser) + L-serine + ATP = L-seryl-tRNA(Ser) + AMP + diphosphate + H(+). It carries out the reaction tRNA(Sec) + L-serine + ATP = L-seryl-tRNA(Sec) + AMP + diphosphate + H(+). It functions in the pathway aminoacyl-tRNA biosynthesis; selenocysteinyl-tRNA(Sec) biosynthesis; L-seryl-tRNA(Sec) from L-serine and tRNA(Sec): step 1/1. Its function is as follows. Catalyzes the attachment of serine to tRNA(Ser) in a two-step reaction: serine is first activated by ATP to form Ser-AMP and then transferred to the acceptor end of tRNA(Ser). Is probably also able to aminoacylate tRNA(Sec) with serine, to form the misacylated tRNA L-seryl-tRNA(Sec), which will be further converted into selenocysteinyl-tRNA(Sec). In the nucleus, binds to the VEGFA core promoter and prevents MYC binding and transcriptional activation by MYC. Recruits SIRT2 to the VEGFA promoter, promoting deacetylation of histone H4 at 'Lys-16' (H4K16). Thereby, inhibits the production of VEGFA and sprouting angiogenesis mediated by VEGFA. This is Serine--tRNA ligase, cytoplasmic (Sars1) from Rattus norvegicus (Rat).